We begin with the raw amino-acid sequence, 98 residues long: Integration host factor subunit alpha (98 aa).

The tract at residues 49 to 70 (FGNFDLRDKNQRPGRNPKTGED) is disordered.

It belongs to the bacterial histone-like protein family. Heterodimer of an alpha and a beta chain.

This protein is one of the two subunits of integration host factor, a specific DNA-binding protein that functions in genetic recombination as well as in transcriptional and translational control. This chain is Integration host factor subunit alpha, found in Serratia proteamaculans (strain 568).